The primary structure comprises 68 residues: Venom peptide 3 (68 aa).

An N-terminal signal peptide occupies residues 1–25; it reads MTKQSIVIVLFAAIAMMACLQRVTA. AXPX repeat units follow at residues 25–28, 33–36, 37–40, 41–44, and 47–50; these read AEPA, AAPI, AEPY, ANPE, and ASPE. The propeptide occupies 26–51; the sequence is EPAPEPIAAPIAEPYANPEAIASPEA. Leu65 carries the leucine amide modification.

Expressed by the venom gland.

The protein localises to the secreted. It is found in the target cell membrane. In terms of biological role, antimicrobial peptide with strong activity against the fungi B.cinerea (MIC=5 uM) and C.albicans (MIC=33 uM), and no activity against the Gram-negative bacterium E.coli (MIC&gt;200 uM) and the Gram-positive bacterium S.aureus (MIC&gt;200 uM). Shows cytolytic activity against insect cell lines. Has no hemolytic activity against human erythrocytes. In vivo, peptide injection in the vicinity of the head and thorax of lepidopteran larvae induces feeding disorder that lasts one or two days before recovering. In Orancistrocerus drewseni (Solitary wasp), this protein is Venom peptide 3.